The chain runs to 452 residues: Trigger factor (452 aa).

The region spanning 170–255 (GDRVTIDFTG…VKSVAAPGPL (86 aa)) is the PPIase FKBP-type domain.

It belongs to the FKBP-type PPIase family. Tig subfamily.

The protein localises to the cytoplasm. It carries out the reaction [protein]-peptidylproline (omega=180) = [protein]-peptidylproline (omega=0). Its function is as follows. Involved in protein export. Acts as a chaperone by maintaining the newly synthesized protein in an open conformation. Functions as a peptidyl-prolyl cis-trans isomerase. The chain is Trigger factor from Xanthobacter autotrophicus (strain ATCC BAA-1158 / Py2).